Reading from the N-terminus, the 150-residue chain is D-aminoacyl-tRNA deacylase (150 aa).

A Gly-cisPro motif, important for rejection of L-amino acids motif is present at residues 136 to 137 (GP).

The protein belongs to the DTD family. In terms of assembly, homodimer.

The protein resides in the cytoplasm. The catalysed reaction is glycyl-tRNA(Ala) + H2O = tRNA(Ala) + glycine + H(+). The enzyme catalyses a D-aminoacyl-tRNA + H2O = a tRNA + a D-alpha-amino acid + H(+). An aminoacyl-tRNA editing enzyme that deacylates mischarged D-aminoacyl-tRNAs. Also deacylates mischarged glycyl-tRNA(Ala), protecting cells against glycine mischarging by AlaRS. Acts via tRNA-based rather than protein-based catalysis; rejects L-amino acids rather than detecting D-amino acids in the active site. By recycling D-aminoacyl-tRNA to D-amino acids and free tRNA molecules, this enzyme counteracts the toxicity associated with the formation of D-aminoacyl-tRNA entities in vivo and helps enforce protein L-homochirality. In Staphylococcus haemolyticus (strain JCSC1435), this protein is D-aminoacyl-tRNA deacylase.